A 554-amino-acid polypeptide reads, in one-letter code: Arginine--tRNA ligase (554 aa).

Residues 130–140 (ANPTGDLHIGH) carry the 'HIGH' region motif.

The protein belongs to the class-I aminoacyl-tRNA synthetase family. In terms of assembly, monomer.

Its subcellular location is the cytoplasm. It carries out the reaction tRNA(Arg) + L-arginine + ATP = L-arginyl-tRNA(Arg) + AMP + diphosphate. The protein is Arginine--tRNA ligase of Staphylococcus carnosus (strain TM300).